The primary structure comprises 452 residues: Chromosomal replication initiator protein DnaA (452 aa).

The domain I, interacts with DnaA modulators stretch occupies residues 1-84 (MTENEQIFWN…SIEYVFEETQ (84 aa)). The tract at residues 84–110 (QSTSNSPQISQNKTAELATETLPFVQN) is domain II. The segment at 111-329 (DLNPKYSFDN…GALKDISLVA (219 aa)) is domain III, AAA+ region. The ATP site is built by glycine 155, glycine 157, lysine 158, and threonine 159. Residues 330–452 (NFKKLDVITV…EMETIKNKIK (123 aa)) form a domain IV, binds dsDNA region.

It belongs to the DnaA family. In terms of assembly, oligomerizes as a right-handed, spiral filament on DNA at oriC.

The protein localises to the cytoplasm. Functionally, plays an essential role in the initiation and regulation of chromosomal replication. ATP-DnaA binds to the origin of replication (oriC) to initiate formation of the DNA replication initiation complex once per cell cycle. Binds the DnaA box (a 9 base pair repeat at the origin) and separates the double-stranded (ds)DNA. Forms a right-handed helical filament on oriC DNA; dsDNA binds to the exterior of the filament while single-stranded (ss)DNA is stabiized in the filament's interior. The ATP-DnaA-oriC complex binds and stabilizes one strand of the AT-rich DNA unwinding element (DUE), permitting loading of DNA polymerase. After initiation quickly degrades to an ADP-DnaA complex that is not apt for DNA replication. Binds acidic phospholipids. In Streptococcus mutans serotype c (strain ATCC 700610 / UA159), this protein is Chromosomal replication initiator protein DnaA.